The primary structure comprises 315 residues: Putative protein phosphatase 2C 24 (315 aa).

Residues 71 to 314 (ALRMEAASCF…DDITVVVAYI (244 aa)) enclose the PPM-type phosphatase domain. Positions 102, 103, 238, and 305 each coordinate Mn(2+).

This sequence belongs to the PP2C family. Requires Mg(2+) as cofactor. Mn(2+) serves as cofactor.

It catalyses the reaction O-phospho-L-seryl-[protein] + H2O = L-seryl-[protein] + phosphate. It carries out the reaction O-phospho-L-threonyl-[protein] + H2O = L-threonyl-[protein] + phosphate. The chain is Putative protein phosphatase 2C 24 from Oryza sativa subsp. japonica (Rice).